The sequence spans 377 residues: Carbonic anhydrase 1 (377 aa).

An N-terminal signal peptide occupies residues 1-20; the sequence is MARTGALLLVALALAGCAQA. The region spanning 38-318 is the Alpha-carbonic anhydrase domain; that stretch reads DHWDHGLNGE…HHHRRLLHNH (281 aa). 3 cysteine pairs are disulfide-bonded: Cys-61-Cys-264, Cys-194-Cys-198, and Cys-296-Cys-351. Asn-101 is a glycosylation site (N-linked (GlcNAc...) asparagine). His-112 (proton acceptor) is an active-site residue. The N-linked (GlcNAc...) asparagine glycan is linked to Asn-135. 3 residues coordinate Zn(2+): His-163, His-165, and His-182. Residues Thr-260 and 260-261 each bind substrate; that span reads TT. An N-linked (GlcNAc...) asparagine glycan is attached at Asn-297.

Belongs to the alpha-carbonic anhydrase family. In terms of assembly, tetramer of two large and two small subunits linked by two disulfide bonds. The cofactor is Zn(2+).

It is found in the periplasm. The catalysed reaction is hydrogencarbonate + H(+) = CO2 + H2O. Its function is as follows. Reversible hydration of carbon dioxide. This Chlamydomonas reinhardtii (Chlamydomonas smithii) protein is Carbonic anhydrase 1 (CAH1).